The chain runs to 776 residues: Glutathione biosynthesis bifunctional protein GshAB (776 aa).

The segment at Met-1–Ile-354 is glutamate--cysteine ligase. Residues Lys-521–Phe-775 form the ATP-grasp domain. Ser-548–Arg-606 serves as a coordination point for ATP. The Mg(2+) site is built by Asp-728, Glu-745, and Asn-747. Mn(2+)-binding residues include Asp-728, Glu-745, and Asn-747.

The protein in the N-terminal section; belongs to the glutamate--cysteine ligase type 1 family. Type 2 subfamily. Monomer. Mg(2+) is required as a cofactor. Mn(2+) serves as cofactor.

It catalyses the reaction L-cysteine + L-glutamate + ATP = gamma-L-glutamyl-L-cysteine + ADP + phosphate + H(+). The enzyme catalyses gamma-L-glutamyl-L-cysteine + glycine + ATP = glutathione + ADP + phosphate + H(+). It functions in the pathway sulfur metabolism; glutathione biosynthesis; glutathione from L-cysteine and L-glutamate: step 1/2. The protein operates within sulfur metabolism; glutathione biosynthesis; glutathione from L-cysteine and L-glutamate: step 2/2. Functionally, synthesizes glutathione from L-glutamate and L-cysteine via gamma-L-glutamyl-L-cysteine. The sequence is that of Glutathione biosynthesis bifunctional protein GshAB from Listeria welshimeri serovar 6b (strain ATCC 35897 / DSM 20650 / CCUG 15529 / CIP 8149 / NCTC 11857 / SLCC 5334 / V8).